Consider the following 266-residue polypeptide: MPNITVTSLLAMKHKGEKITMLTCYDATFAHTACQAGVEVLLIGDSLGMVLQGHDSTLPVTTAETAYHVACVKRGNQGALILADLPFMANATLEQTFINSTTLMQAGAHMIKVEGAAWLGESIRLLAERGIPVCAHMGLTPQSVNVLGGYKVQGRLEAQARQMRADAIALEQAGAAMILLECVPSELAEEITHAVKIPVIGIGAGSATDGQVLVLHDMLGLSITGRVPKFVKNFMIGQPDIQSAIQAYVSAVKDVSFPAIEHGFSA.

Positions 45 and 84 each coordinate Mg(2+). 3-methyl-2-oxobutanoate-binding positions include 45-46, aspartate 84, and lysine 112; that span reads DS. Glutamate 114 is a binding site for Mg(2+). Residue glutamate 181 is the Proton acceptor of the active site.

This sequence belongs to the PanB family. Homodecamer; pentamer of dimers. It depends on Mg(2+) as a cofactor.

It localises to the cytoplasm. It catalyses the reaction 3-methyl-2-oxobutanoate + (6R)-5,10-methylene-5,6,7,8-tetrahydrofolate + H2O = 2-dehydropantoate + (6S)-5,6,7,8-tetrahydrofolate. It functions in the pathway cofactor biosynthesis; (R)-pantothenate biosynthesis; (R)-pantoate from 3-methyl-2-oxobutanoate: step 1/2. Catalyzes the reversible reaction in which hydroxymethyl group from 5,10-methylenetetrahydrofolate is transferred onto alpha-ketoisovalerate to form ketopantoate. This Pseudomonas syringae pv. tomato (strain ATCC BAA-871 / DC3000) protein is 3-methyl-2-oxobutanoate hydroxymethyltransferase.